The following is a 561-amino-acid chain: Asparagine synthetase [glutamine-hydrolyzing] (561 aa).

Cys2 serves as the catalytic For GATase activity. In terms of domain architecture, Glutamine amidotransferase type-2 spans Cys2–Lys191. Residues Arg49–Val53, Asn75–Glu77, and Asp97 each bind L-glutamine. Residues His213–Tyr536 enclose the Asparagine synthetase domain. Residues Leu256, Ile288, and Ser363–Gly364 each bind ATP. N6-acetyllysine is present on Lys385. Thr545 carries the post-translational modification Phosphothreonine.

The catalysed reaction is L-aspartate + L-glutamine + ATP + H2O = L-asparagine + L-glutamate + AMP + diphosphate + H(+). It functions in the pathway amino-acid biosynthesis; L-asparagine biosynthesis; L-asparagine from L-aspartate (L-Gln route): step 1/1. The protein is Asparagine synthetase [glutamine-hydrolyzing] (ASNS) of Bos taurus (Bovine).